The primary structure comprises 425 residues: SWI5-dependent HO expression protein 3 (425 aa).

Positions 24-45 (NLESSPTKDRNTSSQNASSSRV) are disordered. Residues 35–45 (TSSQNASSSRV) show a composition bias toward polar residues. The stretch at 68-197 (QNLLSKLELA…LELSNQNLNY (130 aa)) forms a coiled coil. The tract at residues 322–425 (RKTPNTNDSS…NSMVVHGAQS (104 aa)) is disordered. Low complexity predominate over residues 326–338 (NTNDSSSNGNSSN). Ser343 carries the post-translational modification Phosphoserine. 2 stretches are compositionally biased toward polar residues: residues 345 to 358 (YTASPLLSSGSIPK) and 382 to 397 (KTNVTHNNDPSTSPTI). Ser394 carries the phosphoserine modification.

Belongs to the SHE3 family. Interacts with SHE2 and MYO4.

The protein localises to the endoplasmic reticulum membrane. Its function is as follows. RNA-binding protein that binds specific mRNAs including the ASH1 mRNA, coding for a repressor of the HO endonuclease. Part of the mRNA localization machinery that restricts accumulation of certain proteins to the bud and in the daughter cell. Required for the delivery of cortical endoplasmic reticulum into the emerging bud. The polypeptide is SWI5-dependent HO expression protein 3 (SHE3) (Saccharomyces cerevisiae (strain ATCC 204508 / S288c) (Baker's yeast)).